Consider the following 153-residue polypeptide: Lipoprotein signal peptidase (153 aa).

The next 2 membrane-spanning stretches (helical) occupy residues 52 to 72 (ILAG…IGIV) and 81 to 101 (GQML…GNFI). Active-site residues include Asp111 and Asp129. A helical transmembrane segment spans residues 124-144 (IFNIADSSLCVGVILLFIHML).

It belongs to the peptidase A8 family.

It localises to the cell membrane. It catalyses the reaction Release of signal peptides from bacterial membrane prolipoproteins. Hydrolyzes -Xaa-Yaa-Zaa-|-(S,diacylglyceryl)Cys-, in which Xaa is hydrophobic (preferably Leu), and Yaa (Ala or Ser) and Zaa (Gly or Ala) have small, neutral side chains.. Its pathway is protein modification; lipoprotein biosynthesis (signal peptide cleavage). Functionally, this protein specifically catalyzes the removal of signal peptides from prolipoproteins. The chain is Lipoprotein signal peptidase from Bacillus velezensis (strain DSM 23117 / BGSC 10A6 / LMG 26770 / FZB42) (Bacillus amyloliquefaciens subsp. plantarum).